The sequence spans 25 residues: Alpha-lytic protease (25 aa).

It belongs to the peptidase S1 family.

It catalyses the reaction Preferential cleavage: Ala-|-Xaa, Val-|-Xaa in bacterial cell walls, elastin and other proteins.. The chain is Alpha-lytic protease from Achromobacter lyticus.